Consider the following 84-residue polypeptide: MPKSRIRKKADYTPPPSKQATNIKLGSRGWVAPVMLAMFLIGLAWIVVFYVTDGSLPIDALDNWNIVVGFGFIAAGFGVSTQWK.

2 helical membrane passes run 31 to 51 (VAPV…VFYV) and 60 to 80 (ALDN…FGVS).

The protein belongs to the CrgA family.

The protein resides in the cell membrane. Functionally, involved in cell division. Coordinates growth and cell division. Required for the formation of the sporulation septa. In Streptomyces avermitilis (strain ATCC 31267 / DSM 46492 / JCM 5070 / NBRC 14893 / NCIMB 12804 / NRRL 8165 / MA-4680), this protein is Cell division protein CrgA.